Consider the following 346-residue polypeptide: N-acetyl-gamma-glutamyl-phosphate reductase (346 aa).

Cys154 is an active-site residue.

Belongs to the NAGSA dehydrogenase family. Type 1 subfamily.

It localises to the cytoplasm. It carries out the reaction N-acetyl-L-glutamate 5-semialdehyde + phosphate + NADP(+) = N-acetyl-L-glutamyl 5-phosphate + NADPH + H(+). The protein operates within amino-acid biosynthesis; L-arginine biosynthesis; N(2)-acetyl-L-ornithine from L-glutamate: step 3/4. Its function is as follows. Catalyzes the NADPH-dependent reduction of N-acetyl-5-glutamyl phosphate to yield N-acetyl-L-glutamate 5-semialdehyde. The polypeptide is N-acetyl-gamma-glutamyl-phosphate reductase (Rhodopirellula baltica (strain DSM 10527 / NCIMB 13988 / SH1)).